We begin with the raw amino-acid sequence, 160 residues long: Type IV major fimbrial protein FimA (160 aa).

The propeptide at 1-7 (MKSLQKG) is leader sequence. F8 bears the N-methylphenylalanine mark. The chain crosses the membrane as a helical span at residues 8–28 (FTLIELMIVVAIIGILAAIAI).

Belongs to the N-Me-Phe pilin family. As to quaternary structure, the pili are polar flexible filaments of about 5.4 nanometers diameter and 2.5 micrometers average length; they consist of only a single polypeptide chain arranged in a helical configuration of five subunits per turn in the assembled pilus.

The protein localises to the fimbrium. Its subcellular location is the membrane. In terms of biological role, major component of the type IV fimbriae that plays an essential role in twitching motility, natural transformation, and protease secretion. In Dichelobacter nodosus (Bacteroides nodosus), this protein is Type IV major fimbrial protein FimA (fimA).